An 888-amino-acid chain; its full sequence is MLPKNYDPNEIEPKWQKFWLDEKIYKYELDEKKPSYAIDTPPPFTSGTLHLGHVLSHTWIDIIARYKRMTGYNVLFPQGFDNHGLPTELKVEKEFGISKDQPEKFLQKCIEWTWQAIEAMRNQFIRIGYSADWDLEYHTMDDWYKAAVQKSLIEFYKKGMLYQAEHPVYWCPRCRTSLAKAEVGYVEEDGFLYYIKLPLADGSGHVPIATTRPELMPACVAVFVHPEDERYKHVVGKKVKLPIFEREVPVLADEDVDPSFGTGAVYNCTYGDEQDVVWQKRYNLPVIIAINEDGTMNENAGPYAGLKTEEARKKIAEDLEKMGLLYKKEKIRHRVLRHTERSSCMAPIELLPKKQWFIKVKDFTDEIVKVAEQINWYPPDMFLRLKDWAESMDWDWVISRQRVFGTPIPFWVCDNGEIILPNEEDLPVDPRFEKPPRKCSDGSEPKPVTDVLDCWVDSSITPLIITKWHEAIKGDEEGKKWFEHNFPTALRPQGTDIIRTWAFYTIFRTWVLTGEKPWHDILINGMVAGPDGRKMSKSYGNVVAPDEVIPKYGADALRLWTALAPPGEDHPFKWETVDYNYRFLQKVWNIYRFAERHLENFDPASAPEELEPLDRWILSRLHRLIKFATEEMEKYRFNLLTRELITFVWHEVADDYIEMIKYRLYGDDEESKLKAKAALYELLYNVMLLLAPFVPHITEELYQNLFRERIGAKSVHLLEWPKYSEARIDEEAEKLGELAREIVGAMRRYKNSHGLSLNAKLKHVAIYTTDSYEVLKTIEKDIAGTMNIEKLEIIKGEPELEERIIEIKPNFKTVGPRYGKLVPKITAYLKENAEEVAKALKESGKIEFEVDGQKVELTKDDIVLRKAVFSEGEEVETAVVGDAVILFF.

The short motif at 43-53 (PFTSGTLHLGH) is the 'HIGH' region element. The 'KMSKS' region motif lies at 534-538 (KMSKS). Position 537 (Lys537) interacts with ATP.

This sequence belongs to the class-I aminoacyl-tRNA synthetase family. ValS type 2 subfamily.

It localises to the cytoplasm. It carries out the reaction tRNA(Val) + L-valine + ATP = L-valyl-tRNA(Val) + AMP + diphosphate. Its function is as follows. Catalyzes the attachment of valine to tRNA(Val). As ValRS can inadvertently accommodate and process structurally similar amino acids such as threonine, to avoid such errors, it has a 'posttransfer' editing activity that hydrolyzes mischarged Thr-tRNA(Val) in a tRNA-dependent manner. The polypeptide is Valine--tRNA ligase (Thermococcus kodakarensis (strain ATCC BAA-918 / JCM 12380 / KOD1) (Pyrococcus kodakaraensis (strain KOD1))).